A 467-amino-acid chain; its full sequence is Heat shock factor protein 3 (467 aa).

A DNA-binding region spans residues 16 to 121 (VPGFLAKLWA…LLENIKRKVS (106 aa)). The hydrophobic repeat HR-A/B stretch occupies residues 128–201 (LKVCAEDLHK…LSLMRGNYIV (74 aa)). The tract at residues 364-389 (IQDFLNCIDASLEELQAMLSGKQYSF) is hydrophobic repeat HR-C. Residues 427 to 449 (EDLGASERETAGSKGGQEGTESC) are disordered.

Belongs to the HSF family. Homotrimer. Expressed in most tissues. High levels are found in erythrocytes and low levels in liver.

It localises to the cytoplasm. The protein localises to the nucleus. In terms of biological role, DNA-binding protein that specifically binds heat shock promoter elements (HSE) and activates transcription. HSF3 binds DNA constitutively only when the C-terminal region is deleted. This Gallus gallus (Chicken) protein is Heat shock factor protein 3 (HSF3).